Here is a 331-residue protein sequence, read N- to C-terminus: Induced myeloid leukemia cell differentiation protein Mcl-1 homolog (331 aa).

Residues 85–156 (LAVPPEEMAA…PPEEEEDDLY (72 aa)) are PEST-like. At serine 102 the chain carries Phosphoserine. Residue lysine 117 forms a Glycyl lysine isopeptide (Lys-Gly) (interchain with G-Cter in ubiquitin) linkage. The tract at residues 130–154 (EAAKSSGADGSLPSTPPPPEEEEDD) is disordered. Serine 140 carries the phosphoserine; by GSK3-alpha and GSK3-beta modification. Serine 143 is subject to Phosphoserine. Threonine 144 is subject to Phosphothreonine; by MAPK. Residues lysine 175 and lysine 178 each participate in a glycyl lysine isopeptide (Lys-Gly) (interchain with G-Cter in ubiquitin) cross-link. Positions 190–204 (ALETLRRVGDGVQRN) match the BH3 motif. The BH1 signature appears at 234–253 (VFKDGVTNWGRIVTLISFGA). The BH2 signature appears at 285–300 (DWLVKQRGWDGFVEFF). The chain crosses the membrane as a helical span at residues 308–330 (GIRNVLLAFAGVAGVGAGLAYLI).

Belongs to the Bcl-2 family. In terms of assembly, interacts with HIF3A isoform 2 (via C-terminus domain). Interacts with BAD, BOK, BIK, BAX, BAK1, and TPT1. Interacts with BBC3, BMF and PMAIP1. Interacts with BOP. Interacts with BCL2L11; this interaction may sequester BCL2L11 and prevent its pro-apoptotic activity. Interacts with GIMAP5 and HSPA8/HSC70; the interaction between HSPA8 and MCL1 is impaired in the absence of GIMAP5. Cleaved by CASP3 during apoptosis, yielding a pro-apoptotic C-terminal fragment. In terms of processing, rapidly degraded in the absence of phosphorylation in the PEST region. Post-translationally, phosphorylated on Ser-140, by GSK3, in response to IL3/interleukin-3 withdrawal. Phosphorylation at Ser-140 induces ubiquitination and proteasomal degradation, abrogating the anti-apoptotic activity. Treatment with taxol or okadaic acid induces phosphorylation on additional sites. Ubiquitinated. Ubiquitination is induced by phosphorylation at Ser-140. Deubiquitinated by USP20; leading to increased stability.

The protein resides in the membrane. Its subcellular location is the cytoplasm. It localises to the mitochondrion. The protein localises to the nucleus. It is found in the nucleoplasm. Functionally, involved in the regulation of apoptosis versus cell survival, and in the maintenance of viability but not of proliferation. Mediates its effects by interactions with a number of other regulators of apoptosis. Isoform 2 has antiapoptotic activity. In Mus musculus (Mouse), this protein is Induced myeloid leukemia cell differentiation protein Mcl-1 homolog (Mcl1).